Consider the following 998-residue polypeptide: Protein Smaug (998 aa).

The segment covering 1–37 has biased composition (polar residues); it reads MKYATGTDNAMTSGISGQTNNSNSASNEMQPTTSTPT. Disordered stretches follow at residues 1-45, 50-69, and 329-370; these read MKYA…EATS, TATY…QSQP, and LCPA…GSSS. The span at 329 to 338 shows a compositional bias: low complexity; sequence LCPASGSRSS. Ser564 and Ser575 each carry phosphoserine. The tract at residues 583-763 is interaction with cup; sequence EFKPNYIKFH…KDLKFKLSKM (181 aa). The SAM domain maps to 600–654; it reads GIGLWLKSLRLHKYIELFKNMTYEEMLLITEDFLQSVGVTKGASHKLALCIDKLK. 2 disordered regions span residues 773 to 892 and 942 to 977; these read HVKP…MQQM and NNGS…QQPK. 2 stretches are compositionally biased toward polar residues: residues 801 to 822 and 854 to 864; these read KSGS…NFSL and HQPQYKSSSYP. Ser971 bears the Phosphoserine mark.

It belongs to the SMAUG family. In terms of assembly, interacts with oskar (osk). Binds to the 3'-UTR of nos. Interacts with cup, which in turn recruits eIF4-E, leading to an indirect interaction between smg and eIF4-E that prevents mRNA translation.

The protein localises to the cytoplasm. Its function is as follows. Translation regulator that binds to the 3'-UTR of specific mRNAs such as nanos (nos) and prevent their translation. Prevents translation of unlocalized nos in the bulk cytoplasm via the recruitment of cup. The chain is Protein Smaug from Drosophila simulans (Fruit fly).